A 206-amino-acid chain; its full sequence is Ribosomal RNA small subunit methyltransferase G (206 aa).

S-adenosyl-L-methionine-binding positions include Gly-74, Leu-79, 125 to 126, and Arg-140; that span reads VE.

Belongs to the methyltransferase superfamily. RNA methyltransferase RsmG family.

It is found in the cytoplasm. It catalyses the reaction guanosine(527) in 16S rRNA + S-adenosyl-L-methionine = N(7)-methylguanosine(527) in 16S rRNA + S-adenosyl-L-homocysteine. In terms of biological role, specifically methylates the N7 position of guanine in position 527 of 16S rRNA. The chain is Ribosomal RNA small subunit methyltransferase G from Shewanella baltica (strain OS223).